We begin with the raw amino-acid sequence, 308 residues long: ATP synthase gamma chain (308 aa).

This sequence belongs to the ATPase gamma chain family. In terms of assembly, F-type ATPases have 2 components, CF(1) - the catalytic core - and CF(0) - the membrane proton channel. CF(1) has five subunits: alpha(3), beta(3), gamma(1), delta(1), epsilon(1). CF(0) has three main subunits: a, b and c.

It is found in the cell membrane. In terms of biological role, produces ATP from ADP in the presence of a proton gradient across the membrane. The gamma chain is believed to be important in regulating ATPase activity and the flow of protons through the CF(0) complex. This chain is ATP synthase gamma chain, found in Saccharopolyspora erythraea (strain ATCC 11635 / DSM 40517 / JCM 4748 / NBRC 13426 / NCIMB 8594 / NRRL 2338).